The sequence spans 342 residues: Biotin synthase (342 aa).

The Radical SAM core domain occupies 63–290 (NTVQLSTLLS…GAMVRLSAGR (228 aa)). [4Fe-4S] cluster contacts are provided by Cys-78, Cys-82, and Cys-85. Residues Cys-122, Cys-153, Cys-213, and Arg-285 each coordinate [2Fe-2S] cluster.

Belongs to the radical SAM superfamily. Biotin synthase family. Homodimer. [4Fe-4S] cluster serves as cofactor. [2Fe-2S] cluster is required as a cofactor.

It carries out the reaction (4R,5S)-dethiobiotin + (sulfur carrier)-SH + 2 reduced [2Fe-2S]-[ferredoxin] + 2 S-adenosyl-L-methionine = (sulfur carrier)-H + biotin + 2 5'-deoxyadenosine + 2 L-methionine + 2 oxidized [2Fe-2S]-[ferredoxin]. Its pathway is cofactor biosynthesis; biotin biosynthesis; biotin from 7,8-diaminononanoate: step 2/2. Its function is as follows. Catalyzes the conversion of dethiobiotin (DTB) to biotin by the insertion of a sulfur atom into dethiobiotin via a radical-based mechanism. The sequence is that of Biotin synthase from Cupriavidus pinatubonensis (strain JMP 134 / LMG 1197) (Cupriavidus necator (strain JMP 134)).